Reading from the N-terminus, the 636-residue chain is Sodium-dependent nutrient amino acid transporter 1 (636 aa).

The disordered stretch occupies residues 1-40; that stretch reads MELKTMPQNGANNGNPQGNTSNNNNTNDSSNSNSNNNNKT. Over 1–50 the chain is Cytoplasmic; that stretch reads MELKTMPQNGANNGNPQGNTSNNNNTNDSSNSNSNNNNKTERTNWSNGLE. The segment covering 7–40 has biased composition (low complexity); sequence PQNGANNGNPQGNTSNNNNTNDSSNSNSNNNNKT. 3 helical membrane passes run 51-71, 78-98, and 131-151; these read FLMS…FPFT, GAFL…MYYL, and TICI…YLAV. N-linked (GlcNAc...) asparagine glycosylation occurs at asparagine 184. The next 9 helical transmembrane spans lie at 225 to 245, 254 to 274, 303 to 323, 337 to 357, 397 to 417, 436 to 456, 469 to 489, 511 to 531, and 547 to 567; these read PDWK…LVIM, AAYF…GRAV, AVVQ…MFSS, IVTT…FAIL, LFSA…IVAL, VALV…TPGG, TYVV…IYGV, CWLI…MVTI, and VAGW…GWWY.

The protein belongs to the sodium:neurotransmitter symporter (SNF) (TC 2.A.22) family.

It localises to the membrane. Unusual broad substrate spectrum amino acid:sodium cotransporter that promotes absorption of the D isomers of essential amino acids. Neutral amino acids are the preferred substrates, especially methionine and phenylalanine. The chain is Sodium-dependent nutrient amino acid transporter 1 from Drosophila grimshawi (Hawaiian fruit fly).